Reading from the N-terminus, the 158-residue chain is Regulator of sigma D (158 aa).

This sequence belongs to the Rsd/AlgQ family. As to quaternary structure, interacts with RpoD.

The protein localises to the cytoplasm. In terms of biological role, binds RpoD and negatively regulates RpoD-mediated transcription activation by preventing the interaction between the primary sigma factor RpoD with the catalytic core of the RNA polymerase and with promoter DNA. May be involved in replacement of the RNA polymerase sigma subunit from RpoD to RpoS during the transition from exponential growth to the stationary phase. The polypeptide is Regulator of sigma D (Escherichia coli O127:H6 (strain E2348/69 / EPEC)).